We begin with the raw amino-acid sequence, 387 residues long: Patatin-08 (387 aa).

An N-terminal signal peptide occupies residues 1-23; that stretch reads MATTKSFLILIVMILATTSSTFA. In terms of domain architecture, PNPLA spans 32–230; the sequence is LSIDGGGIKG…TVADPALLSI (199 aa). Residues 36-41 carry the GXGXXG motif; that stretch reads GGGIKG. Residues 75 to 79 carry the GXSXG motif; it reads GTSTG. Catalysis depends on Ser-77, which acts as the Nucleophile. The N-linked (GlcNAc...) asparagine glycan is linked to Asn-115. The Proton acceptor role is filled by Asp-216. Positions 216-218 match the DGA/G motif; that stretch reads DGA. Positions 361–385 form a coiled coil; the sequence is ETYEEALKRFAKLLSDRKKLRANKA.

It belongs to the patatin family. In terms of tissue distribution, tuber.

The protein localises to the vacuole. Probable lipolytic acyl hydrolase (LAH), an activity which is thought to be involved in the response of tubers to pathogens. The protein is Patatin-08 of Solanum tuberosum (Potato).